We begin with the raw amino-acid sequence, 438 residues long: AP-2 complex subunit mu (438 aa).

Residues 177–437 (KNEVFLDIVE…ITKAGSYEIR (261 aa)) enclose the MHD domain.

Belongs to the adaptor complexes medium subunit family. In terms of assembly, adaptor protein complex 2 (AP-2) is a heterotetramer composed of two large adaptins (alpha-type and beta-type subunits), a medium adaptin (mu-type subunit) and a small adaptin (sigma-type subunit).

It is found in the cell membrane. Its subcellular location is the membrane. It localises to the coated pit. The protein resides in the golgi apparatus. The protein localises to the trans-Golgi network membrane. Subunit of the adaptor protein complex 2 (AP-2). Adaptor protein complexes function in protein transport via transport vesicles in different membrane traffic pathways. Adaptor protein complexes are vesicle coat components and appear to be involved in cargo selection and vesicle formation. AP-2 is involved in clathrin-dependent endocytosis in which cargo proteins are incorporated into vesicles surrounded by clathrin (clathrin-coated vesicles, CCVs) which are destined for fusion with the early endosome. AP-2 recognizes Y-X-X-Phi endocytosis signal motif within the cytosolic tails of transmembrane cargo molecules. The complex binds polyphosphoinositides. This is AP-2 complex subunit mu (AP2M) from Arabidopsis thaliana (Mouse-ear cress).